Consider the following 118-residue polypeptide: Hisactophilin-1 (118 aa).

Glycine 2 is lipidated: N-myristoyl glycine. Residues 8–109 (SHHGHFLSAE…HVSTKEHHDH (102 aa)) are contains several HHXH repeats. Tandem repeats lie at residues 34–46 (FHVE…VALK) and 74–86 (FHLE…VSIK). The segment at 34–86 (FHVENHGGKVALKTHCGKYLSIGDHKQVYLSHHLHGDHSLFHLEHHGGKVSIK) is 2 X 13 AA approximate repeats.

This sequence belongs to the hisactophilin family. Homodimer or heterodimer of hatA and hatB, linked by a disulfide bond. In terms of processing, phosphorylated.

The protein localises to the cytoplasm. The protein resides in the cell membrane. Its function is as follows. May act as an intracellular pH sensor that links chemotactic signals to responses in the microfilament system of the cells by nucleating actin polymerization or stabilizing the filaments. The sequence is that of Hisactophilin-1 (hatA) from Dictyostelium discoideum (Social amoeba).